A 556-amino-acid polypeptide reads, in one-letter code: Myb/SANT-like DNA-binding domain-containing protein 2 (556 aa).

Composition is skewed to polar residues over residues 1-10 (MAASCGSSQL) and 36-45 (GNPSLSDPST). The tract at residues 1–82 (MAASCGSSQL…GGASPSVSFS (82 aa)) is disordered. Positions 56-74 (PAAGGAGLGGGGAAGGRGG) are enriched in gly residues. A Myb-like domain is found at 99-169 (SWTPAETNAL…QCRERIKTLR (71 aa)). The tract at residues 431–458 (PRSPLAEPRGADPSNETPGELEVPSPQA) is disordered.

In Gallus gallus (Chicken), this protein is Myb/SANT-like DNA-binding domain-containing protein 2 (MSANTD2).